Here is a 458-residue protein sequence, read N- to C-terminus: ATP synthase subunit beta (458 aa).

Residue 148–155 coordinates ATP; it reads GGAGVGKT.

This sequence belongs to the ATPase alpha/beta chains family. F-type ATPases have 2 components, CF(1) - the catalytic core - and CF(0) - the membrane proton channel. CF(1) has five subunits: alpha(3), beta(3), gamma(1), delta(1), epsilon(1). CF(0) has three main subunits: a(1), b(2) and c(9-12). The alpha and beta chains form an alternating ring which encloses part of the gamma chain. CF(1) is attached to CF(0) by a central stalk formed by the gamma and epsilon chains, while a peripheral stalk is formed by the delta and b chains.

The protein localises to the cell inner membrane. It catalyses the reaction ATP + H2O + 4 H(+)(in) = ADP + phosphate + 5 H(+)(out). Functionally, produces ATP from ADP in the presence of a proton gradient across the membrane. The catalytic sites are hosted primarily by the beta subunits. This Francisella tularensis subsp. novicida (strain U112) protein is ATP synthase subunit beta.